A 23-amino-acid polypeptide reads, in one-letter code: Unknown protein NF016 from 2D-PAGE (23 aa).

The protein is Unknown protein NF016 from 2D-PAGE of Naegleria fowleri (Brain eating amoeba).